We begin with the raw amino-acid sequence, 485 residues long: Glutamyl-tRNA(Gln) amidotransferase subunit A (485 aa).

Residues Lys-76 and Ser-151 each act as charge relay system in the active site. Residue Ser-175 is the Acyl-ester intermediate of the active site.

This sequence belongs to the amidase family. GatA subfamily. Heterotrimer of A, B and C subunits.

It carries out the reaction L-glutamyl-tRNA(Gln) + L-glutamine + ATP + H2O = L-glutaminyl-tRNA(Gln) + L-glutamate + ADP + phosphate + H(+). Functionally, allows the formation of correctly charged Gln-tRNA(Gln) through the transamidation of misacylated Glu-tRNA(Gln) in organisms which lack glutaminyl-tRNA synthetase. The reaction takes place in the presence of glutamine and ATP through an activated gamma-phospho-Glu-tRNA(Gln). This chain is Glutamyl-tRNA(Gln) amidotransferase subunit A, found in Thiobacillus denitrificans (strain ATCC 25259 / T1).